We begin with the raw amino-acid sequence, 121 residues long: Basic phospholipase A2 BmjeTX-II (121 aa).

Cystine bridges form between Cys26–Cys114, Cys28–Cys45, Cys44–Cys95, Cys50–Cys121, Cys51–Cys88, Cys58–Cys82, and Cys76–Cys86. Residues Tyr27, Gly29, and Gly31 each coordinate Ca(2+). His48 is an active-site residue. Asp49 contacts Ca(2+). Asp89 is an active-site residue.

Ca(2+) serves as cofactor. As to expression, expressed by the venom gland.

The protein resides in the secreted. The enzyme catalyses a 1,2-diacyl-sn-glycero-3-phosphocholine + H2O = a 1-acyl-sn-glycero-3-phosphocholine + a fatty acid + H(+). In terms of biological role, snake venom phospholipase A2 (PLA2) that induces blockade of neuromuscular contraction in an indirectly stimulated chick biventer cervicis nerve-muscle preparation. Does not inhibit contraction of chick biventer cervicic nerve-muscle preparation in response to treatment with acetylcholine or KCl. The neuromuscular blockade is mediated by inhibitory action at the presynaptic motor nerve endings. Lyses skeletal myoblasts and myotubes in vitro, and intramuscular injection causes local muscle necrosis. Induces edema in the mouse foot pad. Induces a transient increase of IL-6 levels. PLA2 catalyzes the calcium-dependent hydrolysis of the 2-acyl groups in 3-sn-phosphoglycerides. The protein is Basic phospholipase A2 BmjeTX-II of Bothrops marajoensis (Marajo lancehead).